We begin with the raw amino-acid sequence, 1131 residues long: MSVVERRQINAAINLRLSLLGLPHPDSNAESPDAILVEPLLARQRELSRRLKDRLSAPDLRIQRFLDDYLADCDEHPQLPRTTLVLDEPGLARGLSLPVDGDEFHSDIVASYRLVNGVLHNPKHDRRTTAGVFHISTGGLPIPQDKVEVDKNVYARILARAFQAPDEELALPYTANLPEQAHCWASLLMRPTVLPAVPGRTTEKSYEVHFIVPGGLMCNLDFVEGIFGNAGDPYLPENDASLDPDSWTGHTGCVILAPHLTTMTKKSLGMPHYDDATERQRRDGQCWRHEDDLYNDGKAFKVCARDERGVIVTVIADNYFGYCKKEVKTQISYSANLLGGAEEEHSGGAEVYPAWNLNQDFTDRTPDDFTLADVISTNRELLDVRPEGYAVYKPEPNIVFIPEHSHYSMRTQTISWTAHGAEQTIKLLAGKHYLSPDGYRIHAKHREMDATQWHLIGTSSRAVTCHKPATVSGGGKSEISKSISDAFVFGNAFSHDIDSAMDQVQALFDTDFTNRFADASRNGTDHRPVLSIDRSLGSVIKLLTPSIQYNDEYNAFLEGIEPDVKELAFTVKRYYLPEWGEDWRSHFTVGIMNGRHGNMVRLDGKKIITNMLRVGFREDGSWRLFTLRPDYSPAVKVQTEDDITASTVTPPWEDAEGLPRKYVTNCEHLLFQRPDDAIHRGYDKQAEFDLASGTDTFISNFEPLTHEQARDLLTDVQAYSEFTKPVRKLIERVAAMPDDQSPEFWVCSDDPRHLPDGGRSKNPRYLQVRPTDSNPELTTVADVAGKLARKLPLAGHAPQPIDVVAAGRRNNPPEDKVPALCAYNPLHYMELPELFMEYISSMTGKSPSTTGAGSEGALTKGPFNALPAVYDLNAALLSYALTDYDGWLSSAGYIGPNARVDHDISMLIPELFSHMGPNDRNTKRLISEGYLEKMQDFDFDGHRVLASRLGYRINDRFVTHYFGRIFLHPDVVFSEEMLRPELQDEKIFADSIDVIVKTHQRVAQMYFDDGTVSLACPPIRALLEIMAHGASAEGWTLDSPEFRKLFERESVLASDWYAQRLDAKQAEDVKQAEEGVERLKEYIGRSDSGSVTGRLHLADRLRELEAQLTYERSPEYRQSLVGTLGRQPRFV.

It belongs to the PPi-type phosphoenolpyruvate carboxykinase family. As to quaternary structure, monomer and trimer; forms heterotrimers with PEPCK2 and PEPCK3.

The enzyme catalyses oxaloacetate + diphosphate = phosphoenolpyruvate + phosphate + CO2. Inorganic pyrophosphate (PPi)-dependent phosphoenolpyruvate carboxykinase, which regulates the carbon flow of the central metabolism by fixing CO(2) to phosphoenolpyruvate to produce oxaloacetate. Can also produce pyruvate and diphosphate from phosphoenolpyruvate and phosphate. In Propionibacterium freudenreichii subsp. freudenreichii, this protein is PPi-type phosphoenolpyruvate carboxykinase.